Here is a 164-residue protein sequence, read N- to C-terminus: UPF0225 protein Shewmr7_1921 (164 aa).

This sequence belongs to the UPF0225 family.

This is UPF0225 protein Shewmr7_1921 from Shewanella sp. (strain MR-7).